We begin with the raw amino-acid sequence, 514 residues long: Triacylglyceride transporter MAB_2807 (514 aa).

A run of 11 helical transmembrane segments spans residues 19–39 (IAIG…YVVV), 58–78 (QVTP…PLLG), 88–108 (LILQ…ALST), 118–138 (VIQG…GADL), 157–177 (LGSV…GSWT), 178–198 (AIFW…QFSV), 210–230 (VDVV…VGLY), 239–259 (LPEW…AFIL), 278–298 (PFFA…VTLV), 316–336 (VFLL…GGWL), and 344–364 (IIAV…SGWP). Residues 371–380 (VHNFGFFTLP) form a beta-hairpin region. The next 3 helical transmembrane spans lie at 385–405 (DLVV…SAAL), 420–440 (VVVA…GWGI), and 485–505 (MFAI…FVGS).

This sequence belongs to the major facilitator superfamily. P55 (TC 2.A.1.3.34) family.

It is found in the cell inner membrane. In association with lipoprotein LprG probably transports triacyglycerides (TAG) across the inner cell membrane into the periplasm; TAG probably regulates lipid metabolism and growth regulation and plays a structural role in the outer membrane. TAG (and maybe other lipids) enters the central cavity of the P55 transporter from within the cell inner membrane via clefts on the cytoplasmic face of P55 between TM5-TM8 and TM2-TM11. From there the lipid is probably transferred to the hydrophobic cavity of LprG. Involved in drug susceptibilty, its expression partially complements the antibiotic susceptibilty of a double lprG-mfs deletion. Probably does not function as a bona fide drug efflux pump, but instead plays a role in outer membrane biogenesis. Probably required with LprG for normal surface localization of lipoarabinomannan (LAM). In Mycobacteroides abscessus (strain ATCC 19977 / DSM 44196 / CCUG 20993 / CIP 104536 / JCM 13569 / NCTC 13031 / TMC 1543 / L948) (Mycobacterium abscessus), this protein is Triacylglyceride transporter MAB_2807.